Reading from the N-terminus, the 102-residue chain is A-type ATP synthase subunit F (102 aa).

Belongs to the V-ATPase F subunit family. Has multiple subunits with at least A(3), B(3), C, D, E, F, H, I and proteolipid K(x).

It is found in the cell membrane. Component of the A-type ATP synthase that produces ATP from ADP in the presence of a proton gradient across the membrane. In Thermococcus onnurineus (strain NA1), this protein is A-type ATP synthase subunit F.